A 702-amino-acid polypeptide reads, in one-letter code: Phosphoglycerol transferase I (702 aa).

3 helical membrane passes run 3–25, 73–95, and 102–124; these read WILA…LAWL, GYIA…LRVR, and GGGA…SPLY.

Belongs to the OpgB family.

It localises to the cell inner membrane. The enzyme catalyses a phosphatidylglycerol + a membrane-derived-oligosaccharide D-glucose = a 1,2-diacyl-sn-glycerol + a membrane-derived-oligosaccharide 6-(glycerophospho)-D-glucose.. It functions in the pathway glycan metabolism; osmoregulated periplasmic glucan (OPG) biosynthesis. Its function is as follows. Transfers a phosphoglycerol residue from phosphatidylglycerol to the membrane-bound nascent glucan backbones. This Xanthomonas campestris pv. campestris (strain ATCC 33913 / DSM 3586 / NCPPB 528 / LMG 568 / P 25) protein is Phosphoglycerol transferase I.